We begin with the raw amino-acid sequence, 161 residues long: MNKTSKKHLALPYRPGVGMMILNADNKIFVGKRIDTKISAWQMPQGGIVPGETPSIAAMREMLEEIGSSKGYIIAESKCWYSYDVPSFLIPKLWDGNFRGQKQRWFLIRFTGTNEDININTLNPEFDEWRWASLDELLSIIIPFKRKLYQAVVKEFESLIQ.

A Nudix hydrolase domain is found at 12-154; the sequence is PYRPGVGMMI…KRKLYQAVVK (143 aa). Positions 46 to 67 match the Nudix box motif; the sequence is GGIVPGETPSIAAMREMLEEIG.

Belongs to the Nudix hydrolase family. RppH subfamily. Requires a divalent metal cation as cofactor.

Functionally, accelerates the degradation of transcripts by removing pyrophosphate from the 5'-end of triphosphorylated RNA, leading to a more labile monophosphorylated state that can stimulate subsequent ribonuclease cleavage. In Rickettsia bellii (strain OSU 85-389), this protein is RNA pyrophosphohydrolase.